A 522-amino-acid polypeptide reads, in one-letter code: Glycerol kinase (522 aa).

Threonine 15 is a substrate binding site. Arginine 19 contributes to the ATP binding site. Substrate contacts are provided by residues 89-90 (RE), tyrosine 143, and 255-256 (DQ). ATP-binding positions include threonine 276, glycine 321, and 430 to 434 (GATAN).

This sequence belongs to the FGGY kinase family. As to expression, highly expressed in germinating seeds and senescent leaves, and at lower levels in roots, leaves, flowers and siliques.

It localises to the cytoplasm. The protein localises to the cytosol. It catalyses the reaction glycerol + ATP = sn-glycerol 3-phosphate + ADP + H(+). The protein operates within polyol metabolism; glycerol degradation via glycerol kinase pathway; sn-glycerol 3-phosphate from glycerol: step 1/1. In terms of biological role, key enzyme in the regulation of glycerol uptake and metabolism. Required for resistance to nonhost Pseudomonas bacteria and to the pathogenic fungus B.cinerea. The protein is Glycerol kinase (GLPK) of Arabidopsis thaliana (Mouse-ear cress).